We begin with the raw amino-acid sequence, 212 residues long: Peptide methionine sulfoxide reductase MsrA (212 aa).

Cys-52 is a catalytic residue.

It belongs to the MsrA Met sulfoxide reductase family.

It carries out the reaction L-methionyl-[protein] + [thioredoxin]-disulfide + H2O = L-methionyl-(S)-S-oxide-[protein] + [thioredoxin]-dithiol. It catalyses the reaction [thioredoxin]-disulfide + L-methionine + H2O = L-methionine (S)-S-oxide + [thioredoxin]-dithiol. Functionally, has an important function as a repair enzyme for proteins that have been inactivated by oxidation. Catalyzes the reversible oxidation-reduction of methionine sulfoxide in proteins to methionine. In Escherichia fergusonii (strain ATCC 35469 / DSM 13698 / CCUG 18766 / IAM 14443 / JCM 21226 / LMG 7866 / NBRC 102419 / NCTC 12128 / CDC 0568-73), this protein is Peptide methionine sulfoxide reductase MsrA.